A 371-amino-acid chain; its full sequence is Bifunctional enzyme IspD/IspF (371 aa).

The 2-C-methyl-D-erythritol 4-phosphate cytidylyltransferase stretch occupies residues 1-210 (MSEISLIMLA…LDLPKPSFEI (210 aa)). A 2-C-methyl-D-erythritol 2,4-cyclodiphosphate synthase region spans residues 211-371 (FTGNGFDVHE…NLKYFDWTRL (161 aa)). 2 residues coordinate a divalent metal cation: aspartate 217 and histidine 219. 4-CDP-2-C-methyl-D-erythritol 2-phosphate contacts are provided by residues 217 to 219 (DVH) and 243 to 244 (HS). Histidine 251 is an a divalent metal cation binding site. 4-CDP-2-C-methyl-D-erythritol 2-phosphate is bound by residues 265-267 (DIG), 270-274 (YPDTD), 341-344 (TTTE), phenylalanine 348, and arginine 351.

The protein in the N-terminal section; belongs to the IspD/TarI cytidylyltransferase family. IspD subfamily. This sequence in the C-terminal section; belongs to the IspF family. A divalent metal cation serves as cofactor.

It carries out the reaction 2-C-methyl-D-erythritol 4-phosphate + CTP + H(+) = 4-CDP-2-C-methyl-D-erythritol + diphosphate. The enzyme catalyses 4-CDP-2-C-methyl-D-erythritol 2-phosphate = 2-C-methyl-D-erythritol 2,4-cyclic diphosphate + CMP. It functions in the pathway isoprenoid biosynthesis; isopentenyl diphosphate biosynthesis via DXP pathway; isopentenyl diphosphate from 1-deoxy-D-xylulose 5-phosphate: step 2/6. Its pathway is isoprenoid biosynthesis; isopentenyl diphosphate biosynthesis via DXP pathway; isopentenyl diphosphate from 1-deoxy-D-xylulose 5-phosphate: step 4/6. In terms of biological role, bifunctional enzyme that catalyzes the formation of 4-diphosphocytidyl-2-C-methyl-D-erythritol from CTP and 2-C-methyl-D-erythritol 4-phosphate (MEP) (IspD), and catalyzes the conversion of 4-diphosphocytidyl-2-C-methyl-D-erythritol 2-phosphate (CDP-ME2P) to 2-C-methyl-D-erythritol 2,4-cyclodiphosphate (ME-CPP) with a corresponding release of cytidine 5-monophosphate (CMP) (IspF). This chain is Bifunctional enzyme IspD/IspF, found in Campylobacter jejuni subsp. doylei (strain ATCC BAA-1458 / RM4099 / 269.97).